The sequence spans 160 residues: MTVMKEKGRKVIATNRRARHNYTILDTYEAGIVLVGTEVKSLREGKASLVDAFATVDNGEVWLRGLHIPEFSHGTWTNHSPRRVRKLLLHKREIERLVGKSREGNQTLVPLSMYFSDGKVKVELALARGKQDYDKRQDLARRTAEREVTRELGRRVKGMR.

It belongs to the SmpB family.

Its subcellular location is the cytoplasm. In terms of biological role, required for rescue of stalled ribosomes mediated by trans-translation. Binds to transfer-messenger RNA (tmRNA), required for stable association of tmRNA with ribosomes. tmRNA and SmpB together mimic tRNA shape, replacing the anticodon stem-loop with SmpB. tmRNA is encoded by the ssrA gene; the 2 termini fold to resemble tRNA(Ala) and it encodes a 'tag peptide', a short internal open reading frame. During trans-translation Ala-aminoacylated tmRNA acts like a tRNA, entering the A-site of stalled ribosomes, displacing the stalled mRNA. The ribosome then switches to translate the ORF on the tmRNA; the nascent peptide is terminated with the 'tag peptide' encoded by the tmRNA and targeted for degradation. The ribosome is freed to recommence translation, which seems to be the essential function of trans-translation. This is SsrA-binding protein from Nocardia farcinica (strain IFM 10152).